The following is a 637-amino-acid chain: Type II restriction enzyme and methyltransferase RM.BcgI (637 aa).

This sequence in the C-terminal section; belongs to the N(4)/N(6)-methyltransferase family. As to quaternary structure, heterotrimer of two A and one B subunit. Both subunits are necessary for DNA-binding, which is sequence non-specific. Mg(2+) serves as cofactor.

It carries out the reaction Endonucleolytic cleavage of DNA to give specific double-stranded fragments with terminal 5'-phosphates.. The enzyme catalyses a 2'-deoxyadenosine in DNA + S-adenosyl-L-methionine = an N(6)-methyl-2'-deoxyadenosine in DNA + S-adenosyl-L-homocysteine + H(+). Its activity is regulated as follows. DNA restriction requires S-adenosyl-L-methionine and Mg(2+), and is inhibited by S-adenosyl-homocysteine. SAM may be a cofactor for DNA restriction. In terms of biological role, a B, G, H and S subtype restriction enzyme that recognizes the double-stranded sequence 5'-CGAN(6)TGC-3' and cleaves bilaterally and symmetrically 10 base pairs upstream and 12 base pairs downstream of the sequence to release a 34-base pair fragment. Methylation of the recognition sequence occurs on the adenine in either one or both strands; seems to methylate restricted DNA. This subunit has no methylation or DNA restriction activity on its own. The sequence is that of Type II restriction enzyme and methyltransferase RM.BcgI from Heyndrickxia coagulans (Weizmannia coagulans).